The primary structure comprises 952 residues: RNA polymerase-associated protein RapA (952 aa).

The region spanning E164–D334 is the Helicase ATP-binding domain. Residue D177 to T184 participates in ATP binding. Residues D280–H283 carry the DEAH box motif. The 177-residue stretch at R492–I668 folds into the Helicase C-terminal domain.

It belongs to the SNF2/RAD54 helicase family. RapA subfamily. As to quaternary structure, interacts with the RNAP. Has a higher affinity for the core RNAP than for the holoenzyme. Its ATPase activity is stimulated by binding to RNAP.

In terms of biological role, transcription regulator that activates transcription by stimulating RNA polymerase (RNAP) recycling in case of stress conditions such as supercoiled DNA or high salt concentrations. Probably acts by releasing the RNAP, when it is trapped or immobilized on tightly supercoiled DNA. Does not activate transcription on linear DNA. Probably not involved in DNA repair. This is RNA polymerase-associated protein RapA from Aliivibrio fischeri (strain ATCC 700601 / ES114) (Vibrio fischeri).